Reading from the N-terminus, the 186-residue chain is Ras-related protein rapA (186 aa).

12–19 (GSGGVGKS) serves as a coordination point for GTP. Positions 34 to 42 (YDPTIEDSY) match the Effector region motif. Residues 59–63 (DTAGT) and 118–121 (NKCD) contribute to the GTP site. Cysteine methyl ester is present on Cys-183. Cys-183 carries S-geranylgeranyl cysteine lipidation. The propeptide at 184–186 (ALL) is removed in mature form.

The protein belongs to the small GTPase superfamily. Ras family. Interacts with ralGDS (only when rapA is in its GTP-bound state). Interacts with the Rap guanine nucleotide exchange factor glfB.

It localises to the cell membrane. It carries out the reaction GTP + H2O = GDP + phosphate + H(+). Functionally, g protein of the Ras family that positively regulates phagocytosis and negatively regulates macropinocytosis. May be involved in the activation of guanylyl cyclase during the response to hyperosmotic conditions. Overexpressing cells generate alterations in cell shape and contractile responses. Involved in chemotaxis via regulation of the balance of Ras and Rap signaling at the leading edge of chemotaxing cells. In Dictyostelium discoideum (Social amoeba), this protein is Ras-related protein rapA (rapA).